A 253-amino-acid chain; its full sequence is Triosephosphate isomerase, cytosolic (253 aa).

Asn10 and Lys12 together coordinate substrate. The active-site Electrophile is the His96. The active-site Proton acceptor is the Glu166.

The protein belongs to the triosephosphate isomerase family. Homodimer.

Its subcellular location is the cytoplasm. It catalyses the reaction D-glyceraldehyde 3-phosphate = dihydroxyacetone phosphate. It participates in carbohydrate biosynthesis; gluconeogenesis. The protein operates within carbohydrate degradation; glycolysis; D-glyceraldehyde 3-phosphate from glycerone phosphate: step 1/1. This Zea mays (Maize) protein is Triosephosphate isomerase, cytosolic.